The sequence spans 85 residues: Large ribosomal subunit protein bL27 (85 aa).

Residues 1–26 (MAHKKAGGSTRNGRDSESKRLGVKRF) are disordered.

Belongs to the bacterial ribosomal protein bL27 family.

The sequence is that of Large ribosomal subunit protein bL27 from Saccharophagus degradans (strain 2-40 / ATCC 43961 / DSM 17024).